We begin with the raw amino-acid sequence, 331 residues long: Dioxygenase swnH2 (331 aa).

Polar residues predominate over residues Met1 to Lys11. The segment at Met1 to Ile31 is disordered. Basic and acidic residues predominate over residues Val13 to Ser23. Residues His173, Asp175, and His250 each contribute to the Fe cation site.

The protein belongs to the PhyH family. In terms of assembly, homodimer. It depends on Fe cation as a cofactor.

Its pathway is mycotoxin biosynthesis. In terms of biological role, dioxygenase; part of the gene cluster that mediates the biosynthesis of swainsonine (SW), a cytotoxic fungal alkaloid and a potential cancer therapy drug. Swainsonine production occurs via a multibranched pathway and is dispensable for fungal colonization of plants and infection of insect hosts. The first step of swainsonine biosynthesis is the production of the precursor pipecolic acid (PA) via conversion of L-lysine (Lys) to 1-piperideine-6-carboxylate (P6C) by the aminotransferase swnA, the latter being further reduced to PA by the reductase swnR. PA can be converted from lysine by both the SW biosynthetic cluster and the unclustered genes such as lysine cyclodeaminase. The PKS-NRPS hybrid synthetase swnK uptakes and condensates PA and malonyl-CoA with and without skipping of the ketoreductase (KR) domain in order to produce 3 intermediates, 1-oxoindolizidine, (1S)-1-hydroxyindolizin, and (1R)-1-hydroxyindolizine; with the transisomer (1S)-1-hydroxyindolizin being predominant. The terminal thioester reductase (TE) domain of swnK is involved in reduction of the thioester bond to release the intermediate aldehydes. The oxidoreductase swnN could contribute to the reduction of 1-oxoindolizidine to (1S)-1-hydroxyindolizin and (1R)-1-hydroxyindolizine, contributing to the major route of SW production. The dioxygenase swnH2 would be responsible for the oxidization of (1R)-1-hydroxyindolizine into (1R,2S)-1,2-dihydroxyindolizine and of (1S)-1-hydroxyindolizin to yield both (1R,2S)-1,2-dihydroxyindolizine and (1S,2S)-1,2-dihydroxyindolizine. The dioxygenase swnH1 then performs the conversion of the 1,2-dihydroxyindolizine epimers to SW. The chain is Dioxygenase swnH2 from Metarhizium robertsii (strain ARSEF 23 / ATCC MYA-3075) (Metarhizium anisopliae (strain ARSEF 23)).